A 178-amino-acid polypeptide reads, in one-letter code: Interleukin-1 receptor antagonist protein (178 aa).

The signal sequence occupies residues 1 to 26 (MEICRGPYSHLISLLLILLFRSESAG). Cysteine 92 and cysteine 142 are joined by a disulfide. Asparagine 110 carries N-linked (GlcNAc...) asparagine glycosylation.

It belongs to the IL-1 family.

The protein localises to the secreted. In terms of biological role, anti-inflammatory antagonist of interleukin-1 family of proinflammatory cytokines such as interleukin-1beta/IL1B and interleukin-1alpha/IL1A. Protects from immune dysregulation and uncontrolled systemic inflammation triggered by IL1 for a range of innate stimulatory agents such as pathogens. The chain is Interleukin-1 receptor antagonist protein (Il1rn) from Rattus norvegicus (Rat).